The primary structure comprises 77 residues: DNA-directed RNA polymerase subunit epsilon (77 aa).

The protein belongs to the RNA polymerase subunit epsilon family. As to quaternary structure, RNAP is composed of a core of 2 alpha, a beta and a beta' subunit. The core is associated with a delta subunit, and at least one of epsilon or omega. When a sigma factor is associated with the core the holoenzyme is formed, which can initiate transcription.

It carries out the reaction RNA(n) + a ribonucleoside 5'-triphosphate = RNA(n+1) + diphosphate. A non-essential component of RNA polymerase (RNAP). The sequence is that of DNA-directed RNA polymerase subunit epsilon from Streptococcus pneumoniae (strain P1031).